The primary structure comprises 215 residues: Cytochrome b6 (215 aa).

Residues 32 to 52 traverse the membrane as a helical segment; sequence IFYCLGGITLTCFIVQVATGF. Position 35 (Cys-35) interacts with heme c. Heme b is bound by residues His-86 and His-100. The next 3 helical transmembrane spans lie at 90-110, 116-136, and 186-206; these read ASMM…TGGF, LTWI…VTGY, and LHTF…FLMI. Heme b is bound by residues His-187 and His-202.

The protein belongs to the cytochrome b family. PetB subfamily. The 4 large subunits of the cytochrome b6-f complex are cytochrome b6, subunit IV (17 kDa polypeptide, PetD), cytochrome f and the Rieske protein, while the 4 small subunits are PetG, PetL, PetM and PetN. The complex functions as a dimer. Heme b serves as cofactor. Heme c is required as a cofactor.

It localises to the plastid. The protein localises to the chloroplast thylakoid membrane. Component of the cytochrome b6-f complex, which mediates electron transfer between photosystem II (PSII) and photosystem I (PSI), cyclic electron flow around PSI, and state transitions. This is Cytochrome b6 from Chara vulgaris (Common stonewort).